Reading from the N-terminus, the 727-residue chain is Synaptic vesicle glycoprotein 2C (727 aa).

Positions 1 to 57 (MEDSYKDRTSLMKGAKDIAREVKKQTVKKVNQAVDRAQDEYTQRSYSRFQDEEDDDD) are interaction with SYT1. At 1–154 (MEDSYKDRTS…CGHGRFQWAL (154 aa)) the chain is on the cytoplasmic side. Disordered regions lie at residues 24-84 (KQTV…GHDE) and 109-128 (VGQPKGDEYKDRRELESERR). 2 positions are modified to phosphoserine: S75 and S76. T79 bears the Phosphothreonine mark. The segment covering 113-128 (KGDEYKDRRELESERR) has biased composition (basic and acidic residues). Residues 155-175 (FFVLGMALMADGVEVFVVGFV) traverse the membrane as a helical segment. At 176–191 (LPSAETDLCIPNSGSG) the chain is on the extracellular side. A helical transmembrane segment spans residues 192–212 (WLGSIVYLGMMVGAFFWGGLA). At 213–226 (DKVGRKQSLLICMS) the chain is on the cytoplasmic side. A helical membrane pass occupies residues 227-247 (VNGFFAFLSSFVQGYGFFLFC). A topological domain (extracellular) is located at residue R248. A helical membrane pass occupies residues 249–269 (LLSGFGIGGAIPTVFSYFAEV). Over 270–280 (LAREKRGEHLS) the chain is Cytoplasmic. The helical transmembrane segment at 281–301 (WLCMFWMIGGIYASAMAWAII) threads the bilayer. Over 302–320 (PHYGWSFSMGSAYQFHSWR) the chain is Extracellular. The helical transmembrane segment at 321 to 341 (VFVIVCALPCVSSVVALTFMP) threads the bilayer. Topologically, residues 342–437 (ESPRFLLEVG…PVRDNTIKLT (96 aa)) are cytoplasmic. A helical membrane pass occupies residues 438-458 (IVWFTLSFGYYGLSVWFPDVI). Topologically, residues 459–578 (KPLQSDEYAL…CQITFDDDYS (120 aa)) are extracellular. Position 466 is a phosphotyrosine (Y466). 5 N-linked (GlcNAc...) asparagine glycosylation sites follow: N480, N484, N534, N559, and N565. Residues 519–563 (SCTFEDVTSVNTYFKNCTFIDTVFDNTDFEPYKFIDSEFKNCSFF) form a (Microbial infection) C.botulinum neurotoxin type A-binding region. A helical membrane pass occupies residues 579 to 599 (AYWIYFVNFLGTLAVLPGNIV). Topologically, residues 600–609 (SALLMDRIGR) are cytoplasmic. The helical transmembrane segment at 610-630 (LTMLGGSMVLSGISCFFLWFG) threads the bilayer. The Extracellular segment spans residues 631-636 (TSESMM). The chain crosses the membrane as a helical span at residues 637–657 (IGMLCLYNGLTISAWNSLDVV). The Cytoplasmic segment spans residues 658-669 (TVELYPTDRRAT). Residues 670–690 (GFGFLNALCKAAAVLGNLIFG) traverse the membrane as a helical segment. The Extracellular segment spans residues 691–698 (SLVSITKS). Residues 699–719 (IPILLASTVLVCGGLVGLCLP) form a helical membrane-spanning segment. At 720 to 727 (DTRTQVLM) the chain is on the cytoplasmic side.

The protein belongs to the major facilitator superfamily. In terms of assembly, interacts with SYT1 in a calcium-dependent manner. As to quaternary structure, (Microbial infection) Interacts with C.botulinum neurotoxin type A1 and type A2 (BoNT/A, botA). Interaction is improved by glycosylation of SV2. N-glycosylated. Upon expression in a kidney cell line the most abundant glycan on Asn-534 is GlcNAc(3)Hex(5), while on Asn-559 and Asn-565 the most abundant glycan is GlcNAc2Fuc1Man3GlcNAc3Gal3. Both Asn-559 and Asn-565 have a high degree of glycan heterogeneity.

Its subcellular location is the cytoplasmic vesicle. The protein resides in the secretory vesicle. It localises to the synaptic vesicle membrane. Its function is as follows. Plays a role in the control of regulated secretion in neural and endocrine cells, enhancing selectively low-frequency neurotransmission. Positively regulates vesicle fusion by maintaining the readily releasable pool of secretory vesicles. (Microbial infection) Receptor for C.botulinum neurotoxin type A (BoNT/A, botA); the toxin probably binds via extracellular loop 4. Recognition by BoNT/A relies on both protein-protein and protein-N-glycosylation; glycosylation of Asn-559 increases its affinity for BoNT/A. Also serves as a receptor for the closely related C.botulinum neurotoxin type A2; glycosylation is not essential but enhances the interaction. Functionally, (Microbial infection) Possible receptor for C.botulinum neurotoxin type D (BoNT/D, botD); note that type D does not usually infect humans. This chain is Synaptic vesicle glycoprotein 2C (SV2C), found in Homo sapiens (Human).